A 254-amino-acid polypeptide reads, in one-letter code: 5-oxoprolinase subunit A (254 aa).

This sequence belongs to the LamB/PxpA family. As to quaternary structure, forms a complex composed of PxpA, PxpB and PxpC.

It catalyses the reaction 5-oxo-L-proline + ATP + 2 H2O = L-glutamate + ADP + phosphate + H(+). Functionally, catalyzes the cleavage of 5-oxoproline to form L-glutamate coupled to the hydrolysis of ATP to ADP and inorganic phosphate. The polypeptide is 5-oxoprolinase subunit A (Gluconobacter oxydans (strain 621H) (Gluconobacter suboxydans)).